A 495-amino-acid chain; its full sequence is Ribitol 5-phosphate transferase FKRP (495 aa).

Residues 1-6 are Cytoplasmic-facing; sequence MRLTRC. A helical transmembrane segment spans residues 7-29; it reads QAALAAAITLNLLVLFYVSWLQH. The Lumenal segment spans residues 30 to 495; it reads QPRNSRARGP…PALLSLTGSG (466 aa). Cys-168 and Cys-191 are disulfide-bonded. Residues Asn-172 and Asn-209 are each glycosylated (N-linked (GlcNAc...) asparagine). Zn(2+)-binding residues include Cys-289, Cys-296, Cys-317, and Cys-318. A zinc finger loop region spans residues 289-318; the sequence is CNKETTRCFGTVVGDTPAYLYEERWTPPCC. Residues Gly-345, Arg-352, 359-364, 437-438, and 480-482 each bind CDP-L-ribitol; these read WDYDVD, QD, and NPQ. Asp-360, Asp-362, and Asp-364 together coordinate Mg(2+).

Belongs to the LicD transferase family. In terms of assembly, homodimer; disulfide-linked. Tetramer. Forms a complex composed of FKRP, FKTN/fukutin, and RXYLT1/TMEM5. Also exists as large multimeric protein complexes. May interact with the dystrophin-glycoprotein complex (DGC). Mg(2+) is required as a cofactor. N-glycosylated. Expressed in the retina (at protein level). Expressed predominantly in skeletal muscle, placenta, and heart and relatively weakly in brain, lung, liver, kidney, and pancreas.

It localises to the golgi apparatus membrane. Its subcellular location is the secreted. The protein resides in the cell membrane. It is found in the sarcolemma. The protein localises to the rough endoplasmic reticulum. It localises to the cytoplasm. The catalysed reaction is 3-O-[Rib-ol-P-3-beta-D-GalNAc-(1-&gt;3)-beta-D-GlcNAc-(1-&gt;4)-(O-6-P-alpha-D-Man)]-Thr-[protein] + CDP-L-ribitol = 3-O-[Rib-ol-P-Rib-ol-P-3-beta-D-GalNAc-(1-&gt;3)-beta-D-GlcNAc-(1-&gt;4)-(O-6-P-alpha-D-Man)]-Thr-[protein] + CMP + H(+). It functions in the pathway protein modification; protein glycosylation. Its function is as follows. Catalyzes the transfer of a ribitol 5-phosphate from CDP-L-ribitol to the ribitol 5-phosphate previously attached by FKTN/fukutin to the phosphorylated O-mannosyl trisaccharide (N-acetylgalactosamine-beta-3-N-acetylglucosamine-beta-4-(phosphate-6-)mannose), a carbohydrate structure present in alpha-dystroglycan (DAG1). This constitutes the second step in the formation of the ribose 5-phosphate tandem repeat which links the phosphorylated O-mannosyl trisaccharide to the ligand binding moiety composed of repeats of 3-xylosyl-alpha-1,3-glucuronic acid-beta-1. The chain is Ribitol 5-phosphate transferase FKRP from Homo sapiens (Human).